The primary structure comprises 335 residues: Biotin synthase (335 aa).

A Radical SAM core domain is found at 51–278; that stretch reads NTVQLSSLLS…LAKVRLSAGR (228 aa). [4Fe-4S] cluster is bound by residues Cys-66, Cys-70, and Cys-73. [2Fe-2S] cluster contacts are provided by Cys-110, Cys-141, Cys-201, and Arg-273.

It belongs to the radical SAM superfamily. Biotin synthase family. As to quaternary structure, homodimer. [4Fe-4S] cluster is required as a cofactor. It depends on [2Fe-2S] cluster as a cofactor.

The enzyme catalyses (4R,5S)-dethiobiotin + (sulfur carrier)-SH + 2 reduced [2Fe-2S]-[ferredoxin] + 2 S-adenosyl-L-methionine = (sulfur carrier)-H + biotin + 2 5'-deoxyadenosine + 2 L-methionine + 2 oxidized [2Fe-2S]-[ferredoxin]. Its pathway is cofactor biosynthesis; biotin biosynthesis; biotin from 7,8-diaminononanoate: step 2/2. Functionally, catalyzes the conversion of dethiobiotin (DTB) to biotin by the insertion of a sulfur atom into dethiobiotin via a radical-based mechanism. The sequence is that of Biotin synthase from Bordetella pertussis (strain Tohama I / ATCC BAA-589 / NCTC 13251).